Reading from the N-terminus, the 220-residue chain is tRNA (guanine-N(7)-)-methyltransferase (220 aa).

S-adenosyl-L-methionine-binding residues include Glu-42, Glu-67, and Asp-122. Asp-122 is an active-site residue. Residues Lys-126, Asp-158, and 198 to 201 (TEYE) contribute to the substrate site.

Belongs to the class I-like SAM-binding methyltransferase superfamily. TrmB family.

The catalysed reaction is guanosine(46) in tRNA + S-adenosyl-L-methionine = N(7)-methylguanosine(46) in tRNA + S-adenosyl-L-homocysteine. It functions in the pathway tRNA modification; N(7)-methylguanine-tRNA biosynthesis. Its function is as follows. Catalyzes the formation of N(7)-methylguanine at position 46 (m7G46) in tRNA. This is tRNA (guanine-N(7)-)-methyltransferase from Mycoplasma capricolum subsp. capricolum (strain California kid / ATCC 27343 / NCTC 10154).